Reading from the N-terminus, the 251-residue chain is uncharacterized protein (251 aa).

An N-terminal signal peptide occupies residues 1-18; the sequence is MRILIILSIILCSFFARA.

The protein belongs to the MlaA family.

This is an uncharacterized protein from Rickettsia typhi (strain ATCC VR-144 / Wilmington).